A 257-amino-acid polypeptide reads, in one-letter code: Phosphonates import ATP-binding protein PhnC (257 aa).

The ABC transporter domain maps to 2 to 246 (IEFRNVSKVY…KFAEIYGDVA (245 aa)). 35-42 (GLSGAGKS) contacts ATP.

The protein belongs to the ABC transporter superfamily. Phosphonates importer (TC 3.A.1.9.1) family. The complex is composed of two ATP-binding proteins (PhnC), two transmembrane proteins (PhnE) and a solute-binding protein (PhnD).

The protein localises to the cell membrane. It carries out the reaction phosphonate(out) + ATP + H2O = phosphonate(in) + ADP + phosphate + H(+). Its function is as follows. Part of the ABC transporter complex PhnCDE involved in phosphonates import. Responsible for energy coupling to the transport system. The protein is Phosphonates import ATP-binding protein PhnC of Bacillus cereus (strain ZK / E33L).